Here is a 424-residue protein sequence, read N- to C-terminus: Dihydroorotase-like protein (424 aa).

Belongs to the metallo-dependent hydrolases superfamily. DHOase family. PyrC' subfamily. As to quaternary structure, heterododecamer of 6 active PyrB subunits and 6 non-catalytic PyrC' subunits.

In terms of biological role, non-functional DHOase. This is Dihydroorotase-like protein from Pseudomonas putida (Arthrobacter siderocapsulatus).